Consider the following 784-residue polypeptide: Lon protease (784 aa).

The Lon N-terminal domain maps to 11 to 204; the sequence is IPVLPLRDVV…YLMAMMESEI (194 aa). Residue 356–363 coordinates ATP; the sequence is GPPGVGKT. The Lon proteolytic domain occupies 592 to 773; sequence ENRVGQVTGL…EEVLALALQN (182 aa). Residues Ser-679 and Lys-722 contribute to the active site.

This sequence belongs to the peptidase S16 family. Homohexamer. Organized in a ring with a central cavity.

The protein resides in the cytoplasm. It catalyses the reaction Hydrolysis of proteins in presence of ATP.. In terms of biological role, ATP-dependent serine protease that mediates the selective degradation of mutant and abnormal proteins as well as certain short-lived regulatory proteins. Required for cellular homeostasis and for survival from DNA damage and developmental changes induced by stress. Degrades polypeptides processively to yield small peptide fragments that are 5 to 10 amino acids long. Binds to DNA in a double-stranded, site-specific manner. The sequence is that of Lon protease from Erwinia amylovora (Fire blight bacteria).